The primary structure comprises 388 residues: Flap endonuclease 1 (388 aa).

The segment at 1–104 (MGILGLSKLI…GELAKRAERR (104 aa)) is N-domain. D34 contributes to the Mg(2+) binding site. 2 residues coordinate DNA: R47 and R70. Mg(2+)-binding residues include D86, E158, E160, D179, and D181. The interval 122 to 253 (QIEKFNRRLV…KRAIELIKSY (132 aa)) is I-domain. E158 contacts DNA. 2 residues coordinate DNA: G231 and D233. D233 provides a ligand contact to Mg(2+). Residues 336 to 344 (TQVRLDSFF) are interaction with PCNA. The tract at residues 355-388 (AAAKRKAEESKKSANSKKAKIGGGSGAGRGRRPK) is disordered.

The protein belongs to the XPG/RAD2 endonuclease family. FEN1 subfamily. Interacts with PCNA. Three molecules of FEN1 bind to one PCNA trimer with each molecule binding to one PCNA monomer. PCNA stimulates the nuclease activity without altering cleavage specificity. Mg(2+) is required as a cofactor. In terms of processing, phosphorylated. Phosphorylation upon DNA damage induces relocalization to the nuclear plasma.

Its subcellular location is the nucleus. It localises to the nucleolus. It is found in the nucleoplasm. The protein resides in the mitochondrion. Its function is as follows. Structure-specific nuclease with 5'-flap endonuclease and 5'-3' exonuclease activities involved in DNA replication and repair. During DNA replication, cleaves the 5'-overhanging flap structure that is generated by displacement synthesis when DNA polymerase encounters the 5'-end of a downstream Okazaki fragment. It enters the flap from the 5'-end and then tracks to cleave the flap base, leaving a nick for ligation. Also involved in the long patch base excision repair (LP-BER) pathway, by cleaving within the apurinic/apyrimidinic (AP) site-terminated flap. Acts as a genome stabilization factor that prevents flaps from equilibrating into structures that lead to duplications and deletions. Also possesses 5'-3' exonuclease activity on nicked or gapped double-stranded DNA, and exhibits RNase H activity. Also involved in replication and repair of rDNA and in repairing mitochondrial DNA. The chain is Flap endonuclease 1 from Drosophila grimshawi (Hawaiian fruit fly).